The primary structure comprises 409 residues: Translation initiation factor 2 subunit gamma (409 aa).

Positions 6 to 203 constitute a tr-type G domain; that stretch reads QPEVNIGLVG…AVQSEIPTPE (198 aa). Residues 15–22 form a G1 region; it reads GHVDHGKT. Residues aspartate 18, threonine 22, glycine 43, and serine 45 each contribute to the Mg(2+) site. 18–23 is a GTP binding site; sequence DHGKTT. The G2 stretch occupies residues 43–47; that stretch reads GISIR. The interval 90-93 is G3; it reads DAPG. Residues 146–149 and 181–183 contribute to the GTP site; these read NKVD and SAG. The G4 stretch occupies residues 146 to 149; sequence NKVD. The interval 181–183 is G5; that stretch reads SAG.

Belongs to the TRAFAC class translation factor GTPase superfamily. Classic translation factor GTPase family. EIF2G subfamily. Heterotrimer composed of an alpha, a beta and a gamma chain. Requires Mg(2+) as cofactor.

It carries out the reaction GTP + H2O = GDP + phosphate + H(+). In terms of biological role, eIF-2 functions in the early steps of protein synthesis by forming a ternary complex with GTP and initiator tRNA. This Haloarcula marismortui (strain ATCC 43049 / DSM 3752 / JCM 8966 / VKM B-1809) (Halobacterium marismortui) protein is Translation initiation factor 2 subunit gamma.